Reading from the N-terminus, the 450-residue chain is MADNAPPTAETLLSGAAAHPQTAEEIANQYNLLPKLIPYLDRHLVFPLLEFSSGQDDEKEVVRAKYELLKHTNMTDYVANLWKEIHNSDTIPDEFVKKREEVLSKLQEYEEESAKITQLLQDESVVANLRSDKAANLKFLEEQHGVTVEMVNSLYEYGRFQYSCGSYGNAAELLYQFRVLSTDNDKVASATWGKLASEILTTSWDAAMEEVLKVKDSIETRLFNNPLGQLQNRSWLIHWALFPFFNHDPARDALTELFFSPAYINTIQTNCPWILRYLAAAVITNRNRAHKSSGSYQKQLKDLIRVVRQEGYEYSDPITDFVKALYIDFDFEEAQKKLGEAEDVLRSDFFLVSAADAFVEAARHLISESYCKIHQRIDIKDLSTRLGLNQDEGEKWIVNLIRDTRVDAKIDYKEGTVIMNHPPQSVYQQVIEKTKGAFFRTQVLRFVFPI.

The PCI domain maps to 255–424; it reads TELFFSPAYI…GTVIMNHPPQ (170 aa).

It belongs to the eIF-3 subunit E family. Component of the eukaryotic translation initiation factor 3 (eIF-3) complex.

The protein resides in the cytoplasm. Functionally, component of the eukaryotic translation initiation factor 3 (eIF-3) complex, which is involved in protein synthesis of a specialized repertoire of mRNAs and, together with other initiation factors, stimulates binding of mRNA and methionyl-tRNAi to the 40S ribosome. The eIF-3 complex specifically targets and initiates translation of a subset of mRNAs involved in cell proliferation. The sequence is that of Eukaryotic translation initiation factor 3 subunit E (int6) from Aspergillus clavatus (strain ATCC 1007 / CBS 513.65 / DSM 816 / NCTC 3887 / NRRL 1 / QM 1276 / 107).